The following is a 339-amino-acid chain: Ketol-acid reductoisomerase (NADP(+)) (339 aa).

Residues 1–182 enclose the KARI N-terminal Rossmann domain; it reads MRVYYDRDAD…GGGRAGIIET (182 aa). NADP(+) contacts are provided by residues 24–27, arginine 48, serine 51, threonine 53, and 83–86; these read YGSQ and DELQ. Residue histidine 108 is part of the active site. Residue glycine 134 coordinates NADP(+). In terms of domain architecture, KARI C-terminal knotted spans 183–328; the sequence is SFKEECETDL…AKLRDMMPWI (146 aa). Residues aspartate 191, glutamate 195, glutamate 227, and glutamate 231 each coordinate Mg(2+). Serine 252 lines the substrate pocket.

The protein belongs to the ketol-acid reductoisomerase family. It depends on Mg(2+) as a cofactor.

It catalyses the reaction (2R)-2,3-dihydroxy-3-methylbutanoate + NADP(+) = (2S)-2-acetolactate + NADPH + H(+). It carries out the reaction (2R,3R)-2,3-dihydroxy-3-methylpentanoate + NADP(+) = (S)-2-ethyl-2-hydroxy-3-oxobutanoate + NADPH + H(+). It participates in amino-acid biosynthesis; L-isoleucine biosynthesis; L-isoleucine from 2-oxobutanoate: step 2/4. It functions in the pathway amino-acid biosynthesis; L-valine biosynthesis; L-valine from pyruvate: step 2/4. Its function is as follows. Involved in the biosynthesis of branched-chain amino acids (BCAA). Catalyzes an alkyl-migration followed by a ketol-acid reduction of (S)-2-acetolactate (S2AL) to yield (R)-2,3-dihydroxy-isovalerate. In the isomerase reaction, S2AL is rearranged via a Mg-dependent methyl migration to produce 3-hydroxy-3-methyl-2-ketobutyrate (HMKB). In the reductase reaction, this 2-ketoacid undergoes a metal-dependent reduction by NADPH to yield (R)-2,3-dihydroxy-isovalerate. This Rhodopseudomonas palustris (strain HaA2) protein is Ketol-acid reductoisomerase (NADP(+)).